The sequence spans 697 residues: Glycine--tRNA ligase beta subunit (697 aa).

Belongs to the class-II aminoacyl-tRNA synthetase family. As to quaternary structure, tetramer of two alpha and two beta subunits.

It localises to the cytoplasm. It catalyses the reaction tRNA(Gly) + glycine + ATP = glycyl-tRNA(Gly) + AMP + diphosphate. The polypeptide is Glycine--tRNA ligase beta subunit (Ralstonia nicotianae (strain ATCC BAA-1114 / GMI1000) (Ralstonia solanacearum)).